The primary structure comprises 35 residues: Photosystem II reaction center protein M (35 aa).

Residues 7–27 (GFIATILFVLVPTVFLLILYI) traverse the membrane as a helical segment.

It belongs to the PsbM family. In terms of assembly, PSII is composed of 1 copy each of membrane proteins PsbA, PsbB, PsbC, PsbD, PsbE, PsbF, PsbH, PsbI, PsbJ, PsbK, PsbL, PsbM, PsbT, PsbX, PsbY, PsbZ, Psb30/Ycf12, peripheral proteins PsbO, CyanoQ (PsbQ), PsbU, PsbV and a large number of cofactors. It forms dimeric complexes.

Its subcellular location is the cellular thylakoid membrane. One of the components of the core complex of photosystem II (PSII). PSII is a light-driven water:plastoquinone oxidoreductase that uses light energy to abstract electrons from H(2)O, generating O(2) and a proton gradient subsequently used for ATP formation. It consists of a core antenna complex that captures photons, and an electron transfer chain that converts photonic excitation into a charge separation. This subunit is found at the monomer-monomer interface. This Gloeothece citriformis (strain PCC 7424) (Cyanothece sp. (strain PCC 7424)) protein is Photosystem II reaction center protein M.